The sequence spans 431 residues: Galanin-like G-protein coupled receptor npr-9 (431 aa).

At 1 to 34 (MEFENLTKEEMEQLQKIYDDTISFERKIGIIIPT) the chain is on the extracellular side. A glycan (N-linked (GlcNAc...) asparagine) is linked at Asn5. A helical transmembrane segment spans residues 35 to 55 (IFAVIILVGLVGNALVVIVAF). Residues 56 to 66 (GRQMRNSTNTL) are Cytoplasmic-facing. The chain crosses the membrane as a helical span at residues 67–87 (IIGLAISDLMFLLLCVPFTAV). At 88 to 101 (DYAAPTWIFPEWTC) the chain is on the extracellular side. Cysteines 101 and 182 form a disulfide. A helical membrane pass occupies residues 102-124 (SMINFFQHTSAYCSVWTLTLMAL). The Cytoplasmic portion of the chain corresponds to 125 to 143 (DRYLAVVYPVESMTLRTPR). Residues 144–164 (NTVIALCFIYIIIIASQIPVG) form a helical membrane-spanning segment. Residues 165–203 (RMHGIYVYDFIMEKRSTCAILTIATAEATPTMARTYFMT) are Extracellular-facing. The chain crosses the membrane as a helical span at residues 204 to 224 (FNVFGYVLPLGISVVLYGLML). The Cytoplasmic portion of the chain corresponds to 225-268 (RKLWDMPRPGNSQSVGGRNLTNRDSGSSIRRRPEATAAKRKVTR). Residues 235–252 (NSQSVGGRNLTNRDSGSS) show a composition bias toward polar residues. Residues 235–257 (NSQSVGGRNLTNRDSGSSIRRRP) are disordered. Residues 269–289 (LVLCVLITWALCWLPLNVCFF) form a helical membrane-spanning segment. The Extracellular portion of the chain corresponds to 290–298 (MSGLAYPEP). Residues 299–319 (LVISHGVIMVIVQIASQVLAY) traverse the membrane as a helical segment. At 320–431 (TNSCLNPILY…RSKSTRSYNL (112 aa)) the chain is on the cytoplasmic side. Polar residues predominate over residues 393-414 (SLLKDNSSSATSVQPLRTSIQA). The tract at residues 393 to 431 (SLLKDNSSSATSVQPLRTSIQAKKTKNIGRSKSTRSYNL) is disordered. A compositionally biased stretch (basic residues) spans 415 to 425 (KKTKNIGRSKS).

Belongs to the G-protein coupled receptor 1 family. Exclusively expressed in the AIB interneuron.

It localises to the cell membrane. Functionally, neuropeptide that controls movement such as roaming, foraging and backwards locomotion or 'reversals' in response to environmental cues such as food availability or volatile odorants such as octanol. Antagonizes AIB interneuron activity to control bacterial colonization and may negatively regulate the expression of immunity-related genes such as pqm-1 and dod-22 in response to infection by P.aeruginosa. This chain is Galanin-like G-protein coupled receptor npr-9, found in Caenorhabditis elegans.